The following is a 96-amino-acid chain: Transcription and mRNA export factor SUS1 (96 aa).

Belongs to the ENY2 family. In terms of assembly, component of the nuclear pore complex (NPC)-associated TREX-2 complex (transcription and export complex 2), composed of at least SUS1, SAC3, THP1, SEM1, and CDC31. TREX-2 contains 2 SUS1 chains. The TREX-2 complex interacts with the nucleoporin NUP1. Component of the 1.8 MDa SAGA transcription coactivator-HAT complex. SAGA is built of 5 distinct domains with specialized functions. Within the SAGA complex, SUS1, SGF11, SGF73 and UBP8 form an additional subcomplex of SAGA called the DUB module (deubiquitination module). Interacts directly with THP1, SAC3, SGF11, and with the RNA polymerase II.

The protein resides in the nucleus. Its subcellular location is the nucleoplasm. It is found in the cytoplasm. It localises to the P-body. In terms of biological role, involved in mRNA export coupled transcription activation by association with both the TREX-2 and the SAGA complexes. At the promoters, SAGA is required for recruitment of the basal transcription machinery. It influences RNA polymerase II transcriptional activity through different activities such as TBP interaction and promoter selectivity, interaction with transcription activators, and chromatin modification through histone acetylation and deubiquitination. Within the SAGA complex, participates in a subcomplex required for deubiquitination of H2B and for the maintenance of steady-state H3 methylation levels. The TREX-2 complex functions in docking export-competent ribonucleoprotein particles (mRNPs) to the nuclear entrance of the nuclear pore complex (nuclear basket). TREX-2 participates in mRNA export and accurate chromatin positioning in the nucleus by tethering genes to the nuclear periphery. May also be involved in cytoplasmic mRNA decay by interaction with components of P-bodies. The sequence is that of Transcription and mRNA export factor SUS1 from Kluyveromyces lactis (strain ATCC 8585 / CBS 2359 / DSM 70799 / NBRC 1267 / NRRL Y-1140 / WM37) (Yeast).